A 429-amino-acid polypeptide reads, in one-letter code: Adenylosuccinate synthetase (429 aa).

Residues 12 to 18 (GDEGKGK) and 40 to 42 (GHT) contribute to the GTP site. The active-site Proton acceptor is the aspartate 13. The Mg(2+) site is built by aspartate 13 and glycine 40. IMP is bound by residues 13–16 (DEGK), 38–41 (NAGH), threonine 129, arginine 143, glutamine 223, threonine 238, and arginine 302. Histidine 41 serves as the catalytic Proton donor. 298–304 (TVTGRRR) provides a ligand contact to substrate. Residues arginine 304, 330 to 332 (KLD), and 412 to 414 (STS) each bind GTP.

Belongs to the adenylosuccinate synthetase family. Homodimer. Mg(2+) is required as a cofactor.

The protein resides in the cytoplasm. It catalyses the reaction IMP + L-aspartate + GTP = N(6)-(1,2-dicarboxyethyl)-AMP + GDP + phosphate + 2 H(+). Its pathway is purine metabolism; AMP biosynthesis via de novo pathway; AMP from IMP: step 1/2. In terms of biological role, plays an important role in the de novo pathway of purine nucleotide biosynthesis. Catalyzes the first committed step in the biosynthesis of AMP from IMP. This chain is Adenylosuccinate synthetase, found in Zymomonas mobilis subsp. mobilis (strain ATCC 31821 / ZM4 / CP4).